The following is a 219-amino-acid chain: Leukocyte surface antigen CD53 (219 aa).

Topologically, residues 1–11 (MGMSSLKLLKY) are cytoplasmic. Residues 12–32 (VLFIFNLLFWVCGCCILGFGI) traverse the membrane as a helical segment. The Extracellular segment spans residues 33 to 54 (YFLVQNTYGVLFRNLPFLTLGN). A helical transmembrane segment spans residues 55–69 (ILVIVGSIIMVVAFL). At 70–80 (GCMGSIKENKC) the chain is on the cytoplasmic side. Residues 81-106 (LLMSFFVLLLIILLAEVTIAILLFVY) form a helical membrane-spanning segment. The Extracellular segment spans residues 107–181 (EQKLNTLVAE…NKAKSWFHSN (75 aa)). Asn-119, Asn-129, and Asn-148 each carry an N-linked (GlcNAc...) asparagine glycan. A helical transmembrane segment spans residues 182–206 (FLYIGIITICVCVIQVLGMSFALTL). At 207–219 (NCQIDKTSQALGL) the chain is on the cytoplasmic side.

It belongs to the tetraspanin (TM4SF) family. Interacts with SCIMP. Interacts with CD45/PTPRC. Interacts with IL7R. Interacts with RBL2 and PPP2CA.

It is found in the cell membrane. The protein localises to the cell junction. Its subcellular location is the membrane. Functionally, structural component of specialized membrane microdomains known as tetraspanin-enriched microdomains (TERMs), which act as platforms for receptor clustering and signaling. Participates thereby in diverse biological functions such as cell signal transduction, adhesion, migration and protein trafficking. Plays a role in the activation of monocytes and B-cells. Acts as an essential regulator of B-cell development by promoting interleukin-7 receptor/IL7R signaling. Also promotes, in B-cells, the BCR signaling by recruiting PKC to the plasma membrane in order to phosphorylate its substrates. Plays an essential role in lymphocyte homing to lymph nodes by stabilizing L-selectin/SELL cell surface expression. Also mediates metabolic and inflammatory functions in hepatocytes and adipose tissue by promoting TNF-alpha and LPS signaling independent of the immune compartment. Protects hematopoietic stem cell function in response to stress by facilitating DREAM complex activity through association with p130/RBL2 and its phosphatase PP2A. The sequence is that of Leukocyte surface antigen CD53 (Cd53) from Mus musculus (Mouse).